The following is a 258-amino-acid chain: MIMLNIGPFSFHSRLLLGTGKFPDFDVQQKAIDVSEAEVLTFAVRRMDIFDAKQPNLLEKLDVKKYKLLPNTAGAKNAEEAVRIAKLAKASGLCDMIKVEVIGDDRTLLPDPVETLKASEMLLEEGFIVLPYTSDDVVLARKLQELGVHAIMPGASPIGSGLGIVNPLNLSFIIEQATVPVIVDAGIGSPADAAFAMELGADGVLLNTAVSGAKDPIKMAQAMKLSIEAGRLGFEAGRIARKRCATASSPLEGMSVVE.

The active-site Schiff-base intermediate with DXP is the K98. 1-deoxy-D-xylulose 5-phosphate contacts are provided by residues G159, 185-186 (AG), and 207-208 (NT).

The protein belongs to the ThiG family. As to quaternary structure, homotetramer. Forms heterodimers with either ThiH or ThiS.

It localises to the cytoplasm. The enzyme catalyses [ThiS sulfur-carrier protein]-C-terminal-Gly-aminoethanethioate + 2-iminoacetate + 1-deoxy-D-xylulose 5-phosphate = [ThiS sulfur-carrier protein]-C-terminal Gly-Gly + 2-[(2R,5Z)-2-carboxy-4-methylthiazol-5(2H)-ylidene]ethyl phosphate + 2 H2O + H(+). The protein operates within cofactor biosynthesis; thiamine diphosphate biosynthesis. Its function is as follows. Catalyzes the rearrangement of 1-deoxy-D-xylulose 5-phosphate (DXP) to produce the thiazole phosphate moiety of thiamine. Sulfur is provided by the thiocarboxylate moiety of the carrier protein ThiS. In vitro, sulfur can be provided by H(2)S. This is Thiazole synthase from Bacillus cereus (strain ZK / E33L).